Reading from the N-terminus, the 158-residue chain is 2-amino-4-hydroxy-6-hydroxymethyldihydropteridine pyrophosphokinase (158 aa).

The protein belongs to the HPPK family.

It catalyses the reaction 6-hydroxymethyl-7,8-dihydropterin + ATP = (7,8-dihydropterin-6-yl)methyl diphosphate + AMP + H(+). It functions in the pathway cofactor biosynthesis; tetrahydrofolate biosynthesis; 2-amino-4-hydroxy-6-hydroxymethyl-7,8-dihydropteridine diphosphate from 7,8-dihydroneopterin triphosphate: step 4/4. Catalyzes the transfer of pyrophosphate from adenosine triphosphate (ATP) to 6-hydroxymethyl-7,8-dihydropterin, an enzymatic step in folate biosynthesis pathway. This chain is 2-amino-4-hydroxy-6-hydroxymethyldihydropteridine pyrophosphokinase (folK), found in Methylorubrum extorquens (strain ATCC 14718 / DSM 1338 / JCM 2805 / NCIMB 9133 / AM1) (Methylobacterium extorquens).